Here is a 701-residue protein sequence, read N- to C-terminus: Elongation factor G (701 aa).

The 277-residue stretch at 11-287 (TKVRNIGIMA…AVIDYLPSPL (277 aa)) folds into the tr-type G domain. GTP contacts are provided by residues 20–27 (AHIDAGKT), 84–88 (DTPGH), and 138–141 (NKMD).

The protein belongs to the TRAFAC class translation factor GTPase superfamily. Classic translation factor GTPase family. EF-G/EF-2 subfamily.

Its subcellular location is the cytoplasm. Catalyzes the GTP-dependent ribosomal translocation step during translation elongation. During this step, the ribosome changes from the pre-translocational (PRE) to the post-translocational (POST) state as the newly formed A-site-bound peptidyl-tRNA and P-site-bound deacylated tRNA move to the P and E sites, respectively. Catalyzes the coordinated movement of the two tRNA molecules, the mRNA and conformational changes in the ribosome. The chain is Elongation factor G from Mycobacterium marinum (strain ATCC BAA-535 / M).